Reading from the N-terminus, the 522-residue chain is RRSGNYQPTMWDFEYIQSIHNDYAGDKYMKRFNELKEEMKKMIMAEGSQELEKLELIDNLQRLGVSYHFKHEIMQILSSIKQHSTPADSLYATALKFRLLREHGFHISQEIFDGLSETHTKDTKGMLYLYEASFLATEGESELEQAWTEKHLREYLKNKNIDQNVAKLVHRALELPLHWRMLRLEARWFISFYKKRQDMIPLLLELAILDFNIVQAAHIQDLKYVARWWKETGLAENLPFARDRLVENFFWTIGVNFLPQYGYSRRIETKVNALVTAIDDVYDVFGTLDELQCFTDAIQRWNTDELDNLPDNMKMCYFALDDFINEVACDALIVPYLRNAWTDLCKSYLIEAKWYFSKYIPTMEEYMDNAWISISAPVILVHAYFLIANPVNKEALHYLRNYHDIIRWSALILRLANDLGTSSDELKRGDVPKSIQCYMNEKKVSEEEARQHIRLLISETWKKLNEAHNVAAHPFPKMFVKSAMNLARMAQCMYQHGDGHGGQNSETQNRIMALLFESIPPA.

(2E)-geranyl diphosphate contacts are provided by Arg-242, Asp-279, Asp-283, Arg-414, and Asn-417. Positions 279 and 283 each coordinate Mg(2+). Residues 279-283 (DDVYD) carry the DDXXD motif motif. Mg(2+)-binding residues include Asn-417, Thr-421, and Glu-425.

This sequence belongs to the terpene synthase family. Tpsb subfamily. In terms of assembly, monomer. Requires Mg(2+) as cofactor. It depends on Mn(2+) as a cofactor. In terms of tissue distribution, confined to flowers.

It is found in the plastid. The protein localises to the chloroplast. The catalysed reaction is (2E)-geranyl diphosphate + H2O = (S)-alpha-terpineol + diphosphate. It carries out the reaction (2E)-geranyl diphosphate = sabinene + diphosphate. The enzyme catalyses (2E)-geranyl diphosphate = beta-myrcene + diphosphate. It catalyses the reaction (2E)-geranyl diphosphate = limonene + diphosphate. The catalysed reaction is (2E)-geranyl diphosphate + H2O = 1,8-cineole + diphosphate. It carries out the reaction (2E)-geranyl diphosphate = alpha-pinene + diphosphate. It functions in the pathway secondary metabolite biosynthesis; terpenoid biosynthesis. Monoterpene synthase (TPS) involved in the biosynthesis of monoterpene natural products of the 'cineole cassette', volatile compounds present in floral scent. Catalyzes the conversion of (2E)-geranyl diphosphate (GPP) into alpha-terpineol and, as minor products, sabinene, beta-myrcene, limonene, alpha-pinene and 1,8-cineole. This is Terpineol synthase, chloroplastic from Nicotiana langsdorffii (Langsdorff's tobacco).